The chain runs to 116 residues: Large ribosomal subunit protein bL19 (116 aa).

Belongs to the bacterial ribosomal protein bL19 family.

In terms of biological role, this protein is located at the 30S-50S ribosomal subunit interface and may play a role in the structure and function of the aminoacyl-tRNA binding site. The sequence is that of Large ribosomal subunit protein bL19 from Shewanella loihica (strain ATCC BAA-1088 / PV-4).